Reading from the N-terminus, the 513-residue chain is Putative thymidine phosphorylase 2 (513 aa).

It belongs to the thymidine/pyrimidine-nucleoside phosphorylase family. Type 2 subfamily.

It carries out the reaction thymidine + phosphate = 2-deoxy-alpha-D-ribose 1-phosphate + thymine. This Acidovorax sp. (strain JS42) protein is Putative thymidine phosphorylase 2.